The following is a 248-amino-acid chain: MSFVAIIPARFASTRLPGKPLVDIHGKPMVVHVMERALESGAERVIVATDHIDVAHAVEAAGGEVCMTRADHQSGTERLAEVIDHYQFPDDKVIVNVQGDEPMIPPVIIQQVAKNIAQRSVGMATLAVPVDSVEEAFNPNAVKVVRDAQGNALYFSRATIPWDRERFAVSQDSIGDNFLRHIGIYGYRAGFIRRYVRWEASPLEQIELLEQLRVLWYGEKIHVDVAQAIPSAGVDTAEDLQRVRAAMR.

Belongs to the KdsB family.

It localises to the cytoplasm. It carries out the reaction 3-deoxy-alpha-D-manno-oct-2-ulosonate + CTP = CMP-3-deoxy-beta-D-manno-octulosonate + diphosphate. It functions in the pathway nucleotide-sugar biosynthesis; CMP-3-deoxy-D-manno-octulosonate biosynthesis; CMP-3-deoxy-D-manno-octulosonate from 3-deoxy-D-manno-octulosonate and CTP: step 1/1. The protein operates within bacterial outer membrane biogenesis; lipopolysaccharide biosynthesis. Activates KDO (a required 8-carbon sugar) for incorporation into bacterial lipopolysaccharide in Gram-negative bacteria. The sequence is that of 3-deoxy-manno-octulosonate cytidylyltransferase from Erwinia tasmaniensis (strain DSM 17950 / CFBP 7177 / CIP 109463 / NCPPB 4357 / Et1/99).